Here is a 93-residue protein sequence, read N- to C-terminus: Cell division protein CrgA (93 aa).

2 helical membrane passes run 31-51 and 70-90; these read VWFV…LMVF and LGPW…LLTM.

This sequence belongs to the CrgA family.

The protein localises to the cell membrane. Functionally, involved in cell division. The protein is Cell division protein CrgA of Mycobacterium bovis (strain ATCC BAA-935 / AF2122/97).